The primary structure comprises 76 residues: Histone H2A (76 aa).

The disordered stretch occupies residues 1–23 (MSGRGKTGGKARAKAKTRSSRAG). Ser-2 bears the N-acetylserine; in acipensins mark. At Ser-2 the chain carries N-acetylserine; in histone H2A. Ser-2 carries the post-translational modification Phosphoserine; in histone H2A. Lys-6 carries the post-translational modification N6-(2-hydroxyisobutyryl)lysine. Lys-6 is subject to N6-acetyllysine; in histone H2A. Positions 7–19 (TGGKARAKAKTRS) are enriched in basic residues. Lys-10 bears the N6-(2-hydroxyisobutyryl)lysine; alternate mark. Lys-10 is modified (N6-lactoyllysine; alternate). Lys-10 carries the post-translational modification N6-succinyllysine. Glycyl lysine isopeptide (Lys-Gly) (interchain with G-Cter in ubiquitin); in histone H2A cross-links involve residues Lys-14 and Lys-16. Lys-37 carries the post-translational modification N6-(2-hydroxyisobutyryl)lysine; alternate. An N6-(2-hydroxyisobutyryl)lysine mark is found at Lys-65 and Lys-66.

This sequence belongs to the histone H2A family. As to quaternary structure, the nucleosome is a histone octamer containing two molecules each of H2A, H2B, H3 and H4 assembled in one H3-H4 heterotetramer and two H2A-H2B heterodimers. The octamer wraps approximately 147 bp of DNA. Phosphorylation on Ser-2 is enhanced during mitosis. Phosphorylation on Ser-2 directly represses transcription.

It is found in the nucleus. It localises to the chromosome. In terms of biological role, core component of nucleosome. Nucleosomes wrap and compact DNA into chromatin, limiting DNA accessibility to the cellular machineries which require DNA as a template. Histones thereby play a central role in transcription regulation, DNA repair, DNA replication and chromosomal stability. DNA accessibility is regulated via a complex set of post-translational modifications of histones, also called histone code, and nucleosome remodeling. Functionally, acipensins are antimicrobial peptides. Acipensins 1 and 2 have antibacterial activity against Gram-positive bacteria L.monocytogenes EGD (MIC are 1.1 uM and 1.0 uM, respectively) and S.aureus ATCC 33591 (MIC are 0.9 uM and 0.6 uM, respectively), against Gram-negative bacterium E.coli ML-35p (MIC are 0.7 uM and 0.3 uM, respectively) and antifungal activity against C.albicans 820 (MIC are 1.0 uM and 0.9 uM, respectively). Acipensin 6 has antibacterial activity against Gram-negative bacterium E.coli ML-35p (MIC=2.5 uM). Antimicrobial activity is reduced by high ionic strength. Acipensins 1, 2 and 6 have no hemolytic (up to 40 uM) or cytotoxic (up to 20 uM) effects on human cells in vitro. The polypeptide is Histone H2A (Acipenser gueldenstaedtii (Russian sturgeon)).